The sequence spans 39 residues: Hementin (39 aa).

It depends on a divalent metal cation as a cofactor. In terms of tissue distribution, expressed mainly in the posterior salivary glands and, to a lesser extent, in the anterior salivary glands and secreted into the proboscis (at protein level).

The protein resides in the secreted. Its activity is regulated as follows. Inhibited by EDTA, cysteine, DTT and sodium phosphate. Partially inhibited by EGTA, citrate, Tris and glycine. Not inhibited by DFP, PMSF, iodoacetic acid and leupeptin. Requires sodium chloride concentrations higher than 0.15 M for activity. Its function is as follows. Metalloprotease with anticoagulant activity. Cleaves fibrinogen Aalpha (FGA), gamma (FGG) and Bbeta (FGB) chains after positions 'Asn-121', 'Lys-160' and 'Pro-102', respectively. Breaks down cross-linked and non-cross-linked fibrin clots. Prevents and reverts platelet aggregation induced by ADP and collagen. Prevents thrombin-induced platelet clotting. Does not affect plasma levels of coagulation factors prothrombin (F2), V (F5), VII (F7), VIII (F8), IX (F9), X (F10), XI (F11), XII (F12), plasma kallikrein (KLKB1) and kininogen-1 (KNG1). In Haementeria ghilianii (Amazon leech), this protein is Hementin.